We begin with the raw amino-acid sequence, 889 residues long: Cytoplasmic aconitate hydratase (889 aa).

Substrate is bound by residues Gln86 and 205 to 207; that span reads DSH. [4Fe-4S] cluster contacts are provided by Cys437, Cys503, and Cys506. Residues Arg536, Arg541, Arg699, and 779-780 each bind substrate; that span reads SR.

This sequence belongs to the aconitase/IPM isomerase family. It depends on [4Fe-4S] cluster as a cofactor.

It is found in the cytoplasm. The protein localises to the cytosol. The enzyme catalyses citrate = D-threo-isocitrate. Its function is as follows. Bifunctional iron sensor that switches between 2 activities depending on iron availability. Iron deprivation, promotes its mRNA binding activity through which it regulates the expression of genes involved in iron uptake, sequestration and utilization. Binds to iron-responsive elements (IRES) in the untranslated region of target mRNAs preventing for instance the translation of ferritin and aminolevulinic acid synthase and stabilizing the transferrin receptor mRNA. In terms of biological role, conversely, when cellular iron levels are high, binds a 4Fe-4S cluster which precludes RNA binding activity and promotes the aconitase activity, the isomerization of citrate to isocitrate via cis-aconitate. The chain is Cytoplasmic aconitate hydratase (ACO1) from Gallus gallus (Chicken).